The following is a 212-amino-acid chain: Proteasome subunit beta type-2 (212 aa).

This sequence belongs to the peptidase T1B family. The 26S proteasome consists of a 20S proteasome core and two 19S regulatory subunits. The 20S proteasome core is composed of 28 subunits that are arranged in four stacked rings, resulting in a barrel-shaped structure. The two end rings are each formed by seven alpha subunits, and the two central rings are each formed by seven beta subunits. The catalytic chamber with the active sites is on the inside of the barrel.

The protein resides in the cytoplasm. Its subcellular location is the nucleus. Its function is as follows. Non-catalytic component of the proteasome, a multicatalytic proteinase complex which is characterized by its ability to cleave peptides with Arg, Phe, Tyr, Leu, and Glu adjacent to the leaving group at neutral or slightly basic pH. The proteasome has an ATP-dependent proteolytic activity. This chain is Proteasome subunit beta type-2 (PBD1), found in Oryza sativa subsp. japonica (Rice).